Consider the following 272-residue polypeptide: Shikimate dehydrogenase (NADP(+)) (272 aa).

Shikimate is bound by residues 14–16 (SKS) and threonine 61. Residue lysine 65 is the Proton acceptor of the active site. Residue glutamate 77 participates in NADP(+) binding. Shikimate contacts are provided by asparagine 86 and aspartate 102. Residues 126–130 (GAGGA), 149–154 (NRTVSR), and methionine 213 contribute to the NADP(+) site. Tyrosine 215 serves as a coordination point for shikimate. Glycine 237 contacts NADP(+).

It belongs to the shikimate dehydrogenase family. Homodimer.

It carries out the reaction shikimate + NADP(+) = 3-dehydroshikimate + NADPH + H(+). The protein operates within metabolic intermediate biosynthesis; chorismate biosynthesis; chorismate from D-erythrose 4-phosphate and phosphoenolpyruvate: step 4/7. Its function is as follows. Involved in the biosynthesis of the chorismate, which leads to the biosynthesis of aromatic amino acids. Catalyzes the reversible NADPH linked reduction of 3-dehydroshikimate (DHSA) to yield shikimate (SA). This is Shikimate dehydrogenase (NADP(+)) from Escherichia coli (strain SMS-3-5 / SECEC).